The primary structure comprises 372 residues: N-acetylneuraminate-9-phosphate synthase (372 aa).

In terms of domain architecture, AFP-like spans S314–N372.

It catalyses the reaction aldehydo-N-acetyl-D-mannosamine 6-phosphate + phosphoenolpyruvate + H2O = N-acetylneuraminate 9-phosphate + phosphate. It carries out the reaction aldehydo-D-mannose 6-phosphate + phosphoenolpyruvate + H2O = 3-deoxy-D-glycero-beta-D-galacto-non-2-ulopyranosonate 9-phosphate + phosphate. Its function is as follows. Catalyzes the condensation of phosphoenolpyruvate (PEP) and N-acetylmannosamine 6-phosphate (ManNAc-6-P) or D-mannose 6-phosphate (Man-6-P) to generate the phosphorylated forms of both the sialic acids N-acetylneuraminic acid (Neu5Ac) and deaminoneuraminic acid (KDN), respectively. Essential for biosynthesis of sialic acids in neurons of the central nervous system. In Drosophila melanogaster (Fruit fly), this protein is N-acetylneuraminate-9-phosphate synthase.